The sequence spans 78 residues: Putative membrane protein insertion efficiency factor (78 aa).

Belongs to the UPF0161 family.

The protein localises to the cell membrane. In terms of biological role, could be involved in insertion of integral membrane proteins into the membrane. The chain is Putative membrane protein insertion efficiency factor from Limosilactobacillus reuteri (strain DSM 20016) (Lactobacillus reuteri).